The following is a 200-amino-acid chain: High frequency lysogenization protein HflD homolog (200 aa).

The protein belongs to the HflD family.

It localises to the cytoplasm. Its subcellular location is the cell inner membrane. The sequence is that of High frequency lysogenization protein HflD homolog from Pseudoalteromonas translucida (strain TAC 125).